The chain runs to 1486 residues: Chromosome partition protein MukB (1486 aa).

Position 34-41 (Gly-34–Ser-41) interacts with ATP. 3 coiled-coil regions span residues Leu-326–Gln-418, Leu-444–Gln-480, and Arg-509–Val-603. Residues Pro-666–Arg-783 form a flexible hinge region. Coiled coils occupy residues Glu-835–Glu-923, Glu-977–Ala-1115, and Val-1209–Val-1265.

Belongs to the SMC family. MukB subfamily. In terms of assembly, homodimerization via its hinge domain. Binds to DNA via its C-terminal region. Interacts, and probably forms a ternary complex, with MukE and MukF via its C-terminal region. The complex formation is stimulated by calcium or magnesium. Interacts with tubulin-related protein FtsZ.

The protein localises to the cytoplasm. The protein resides in the nucleoid. Its function is as follows. Plays a central role in chromosome condensation, segregation and cell cycle progression. Functions as a homodimer, which is essential for chromosome partition. Involved in negative DNA supercoiling in vivo, and by this means organize and compact chromosomes. May achieve or facilitate chromosome segregation by condensation DNA from both sides of a centrally located replisome during cell division. This Escherichia coli O7:K1 (strain IAI39 / ExPEC) protein is Chromosome partition protein MukB.